The sequence spans 592 residues: MGKRPIEDDAVASSELSRKKSKKEKSGKSKKSVIGEGADTNGHAPAAETTVDGSENEALSKAERKAAKKAKKEAKEASKAGKADAPTVENDEEAAKAARKAARKAEKKKLKEAEKTASSAPTEASSVPAQTLSSSNAGSYTEHTELAQLPQSEIDAFLTKNTMTIEDPKPAARKLRPIVNFKYLPVTDESQRAPFAGFTAPTPIQAATWPFLLSGRDMVGVAETGSGKTLAFGVPCVRAILSLPKDKRKGIKAVIVSPTRELAVQIYDQLVALAHPAGLSVVCVYGGVPKDPQVAACRKAHIVVATPGRLNDLIGDGSADLSNADYVVLDEADRMLDKGFEEPIRQIISQTPKKRQTLMFTATWPPSVRDLASTFMVSPVRITIGDNQSGELRANVRIKQLVEVLDPHAKEQRLLQLLKQYQSGKNKDDRILVFCLYKKEAMRIENFIRMKGFRVGGIHGDLSQEKRSASLAAFKEGQVPLLVATDVAARGLDIPAVKLVINVTFPLTAEDYVHRIGRTGRAGKEGLAITFFTEHDKGLSGSLINVLKAANQEVPEELLKFGTTVKKKEHGAYGAFYKDVDNTKAATKITFD.

Residues 1 to 146 (MGKRPIEDDA…AGSYTEHTEL (146 aa)) are disordered. The segment covering 19–31 (KKSKKEKSGKSKK) has biased composition (basic residues). Over residues 73–82 (EAKEASKAGK) the composition is skewed to basic and acidic residues. Positions 97-108 (AARKAARKAEKK) are enriched in basic residues. Over residues 116–141 (TASSAPTEASSVPAQTLSSSNAGSYT) the composition is skewed to polar residues. A Q motif motif is present at residues 179–206 (VNFKYLPVTDESQRAPFAGFTAPTPIQA). In terms of domain architecture, Helicase ATP-binding spans 209–382 (WPFLLSGRDM…STFMVSPVRI (174 aa)). An ATP-binding site is contributed by 222 to 229 (AETGSGKT). Residues 330 to 333 (DEAD) carry the DEAD box motif. The 150-residue stretch at 413-562 (RLLQLLKQYQ…EVPEELLKFG (150 aa)) folds into the Helicase C-terminal domain.

It belongs to the DEAD box helicase family. DDX5/DBP2 subfamily.

The protein localises to the nucleus. The protein resides in the nucleolus. It catalyses the reaction ATP + H2O = ADP + phosphate + H(+). Its function is as follows. ATP-dependent RNA helicase required for 60S ribosomal subunit synthesis. Involved in efficient pre-rRNA processing, predominantly at site A3, which is necessary for the normal formation of 25S and 5.8S rRNAs. This chain is ATP-dependent RNA helicase DBP3 (DBP3), found in Phaeosphaeria nodorum (strain SN15 / ATCC MYA-4574 / FGSC 10173) (Glume blotch fungus).